A 395-amino-acid polypeptide reads, in one-letter code: Succinyl-diaminopimelate desuccinylase (395 aa).

Residue His-74 coordinates Zn(2+). Asp-76 is an active-site residue. Residue Asp-107 coordinates Zn(2+). Glu-141 serves as the catalytic Proton acceptor. Glu-142, Glu-170, and His-368 together coordinate Zn(2+).

Belongs to the peptidase M20A family. DapE subfamily. As to quaternary structure, homodimer. Zn(2+) is required as a cofactor. Requires Co(2+) as cofactor.

It carries out the reaction N-succinyl-(2S,6S)-2,6-diaminopimelate + H2O = (2S,6S)-2,6-diaminopimelate + succinate. It participates in amino-acid biosynthesis; L-lysine biosynthesis via DAP pathway; LL-2,6-diaminopimelate from (S)-tetrahydrodipicolinate (succinylase route): step 3/3. Catalyzes the hydrolysis of N-succinyl-L,L-diaminopimelic acid (SDAP), forming succinate and LL-2,6-diaminopimelate (DAP), an intermediate involved in the bacterial biosynthesis of lysine and meso-diaminopimelic acid, an essential component of bacterial cell walls. In Chelativorans sp. (strain BNC1), this protein is Succinyl-diaminopimelate desuccinylase.